A 165-amino-acid chain; its full sequence is Protein SprT (165 aa).

Positions 20–163 constitute a SprT-like domain; it reads EKLTQANLKL…RCVHCGEQLV (144 aa). Residue His-78 participates in Zn(2+) binding. Glu-79 is a catalytic residue. His-82 contacts Zn(2+).

Belongs to the SprT family. Zn(2+) serves as cofactor.

The protein localises to the cytoplasm. The chain is Protein SprT from Escherichia coli O139:H28 (strain E24377A / ETEC).